Consider the following 76-residue polypeptide: Zinc finger protein 706 (76 aa).

Over residues 1-13 (MARGQQKIQSQQK) the composition is skewed to low complexity. 2 disordered regions span residues 1–32 (MARGQQKIQSQQKNAKKQAEQKKKQGHDQKAA) and 53–76 (TFKQHFESKHPKTPLPPELADVQA). Basic and acidic residues-rich tracts occupy residues 17-31 (KQAEQKKKQGHDQKA) and 53-62 (TFKQHFESKH). The segment at 39–62 (YTCTVCRTQMPDPKTFKQHFESKH) adopts a C2H2-type zinc-finger fold.

It is found in the cytoplasm. It localises to the nucleus. Functionally, transcription repressor involved in the exit of embryonic stem cells (ESCs) from self-renewal. The protein is Zinc finger protein 706 of Gallus gallus (Chicken).